Reading from the N-terminus, the 183-residue chain is Ribulose bisphosphate carboxylase small subunit, chloroplastic (183 aa).

Residues 1–59 (MASSMISSGTVATVSADRPAPAQARMVAPFNGLKSSSAFPVTRKSNDITSIASNGGRVQ) constitute a chloroplast transit peptide.

It belongs to the RuBisCO small chain family. In terms of assembly, heterohexadecamer of 8 large and 8 small subunits.

The protein resides in the plastid. It is found in the chloroplast. In terms of biological role, ruBisCO catalyzes two reactions: the carboxylation of D-ribulose 1,5-bisphosphate, the primary event in carbon dioxide fixation, as well as the oxidative fragmentation of the pentose substrate. Both reactions occur simultaneously and in competition at the same active site. Although the small subunit is not catalytic it is essential for maximal activity. This chain is Ribulose bisphosphate carboxylase small subunit, chloroplastic, found in Pyrus pyrifolia (Chinese pear).